A 308-amino-acid chain; its full sequence is tRNA pseudouridine synthase B (308 aa).

D47 (nucleophile) is an active-site residue.

Belongs to the pseudouridine synthase TruB family. Type 1 subfamily.

It carries out the reaction uridine(55) in tRNA = pseudouridine(55) in tRNA. Functionally, responsible for synthesis of pseudouridine from uracil-55 in the psi GC loop of transfer RNAs. This chain is tRNA pseudouridine synthase B, found in Rhodospirillum rubrum (strain ATCC 11170 / ATH 1.1.1 / DSM 467 / LMG 4362 / NCIMB 8255 / S1).